Here is a 366-residue protein sequence, read N- to C-terminus: 3-dehydroquinate synthase (366 aa).

NAD(+) contacts are provided by residues 71 to 76 (DGEQYK), 105 to 109 (GVIGD), 129 to 130 (TT), lysine 142, lysine 151, and 169 to 172 (CLQT). Residues glutamate 184, histidine 248, and histidine 265 each coordinate Zn(2+).

The protein belongs to the sugar phosphate cyclases superfamily. Dehydroquinate synthase family. The cofactor is NAD(+). It depends on Co(2+) as a cofactor. Requires Zn(2+) as cofactor.

Its subcellular location is the cytoplasm. The enzyme catalyses 7-phospho-2-dehydro-3-deoxy-D-arabino-heptonate = 3-dehydroquinate + phosphate. It functions in the pathway metabolic intermediate biosynthesis; chorismate biosynthesis; chorismate from D-erythrose 4-phosphate and phosphoenolpyruvate: step 2/7. Functionally, catalyzes the conversion of 3-deoxy-D-arabino-heptulosonate 7-phosphate (DAHP) to dehydroquinate (DHQ). The polypeptide is 3-dehydroquinate synthase (Photorhabdus laumondii subsp. laumondii (strain DSM 15139 / CIP 105565 / TT01) (Photorhabdus luminescens subsp. laumondii)).